The primary structure comprises 303 residues: MEIQNDQWVSAFLLYLKMEKNHSPHTIVNYELDLRHFRDFMEQQSIPSFAAVSYAFVRHYLTVLYEQEYARSTVSRKLSTLRSFYQFLVREKWVMENPFLLAHTPKGVKKLPSFLYEEEMEQLLDALNGDSPLQLRNRALFETIYASGLRVSECCGLKLQDVDLSIGTVFVFGKGRKERYVPIGSFACDAIQEYIENGREKLLKKSKSVDLPGDLFLNYRGGPLTERGVRKILHQALDQAALSTRVSPHSLRHSFATHLLNNGADLRVVQDLLGHENLSTTQVYTHVTKDRLRDVYRTHHPRA.

One can recognise a Core-binding (CB) domain in the interval 3-89; it reads IQNDQWVSAF…TLRSFYQFLV (87 aa). A Tyr recombinase domain is found at 110–297; it reads KLPSFLYEEE…TKDRLRDVYR (188 aa). Residues Arg-150, Lys-174, His-249, Arg-252, and His-275 contribute to the active site. The O-(3'-phospho-DNA)-tyrosine intermediate role is filled by Tyr-284.

Belongs to the 'phage' integrase family. XerC subfamily. In terms of assembly, forms a cyclic heterotetrameric complex composed of two molecules of XerC and two molecules of XerD.

It is found in the cytoplasm. Its function is as follows. Site-specific tyrosine recombinase, which acts by catalyzing the cutting and rejoining of the recombining DNA molecules. The XerC-XerD complex is essential to convert dimers of the bacterial chromosome into monomers to permit their segregation at cell division. It also contributes to the segregational stability of plasmids. The polypeptide is Tyrosine recombinase XerC (Halalkalibacterium halodurans (strain ATCC BAA-125 / DSM 18197 / FERM 7344 / JCM 9153 / C-125) (Bacillus halodurans)).